A 488-amino-acid polypeptide reads, in one-letter code: MTKTERYLQLRSMIPEMRRIKRIHFVGIGGAGMGGIAEVLVNEGYVVSGSDIAQNAVTDRLCLLGAKIHIGHGADNVQQADVVVVSTAINPENPEIIAAKELRIPIVRRAEMLAELMRYRHGVAIAGTHGKTTTTSLIASLYGQAGRDPTFVIGGLLNSAGTNARLGTSRYLIAEADESDASFLHLQPMVSVVTNIEADHMDTYGGDFEKLKSTFVDFLHNLPFYGVAVVCIDDAVVREIMPRIGRHMITYGFSDDADVQALNFQQQGHQCRFTVRRKGKEDLDLLLNLPGQHNVLNALAAIAVATEDEIDDSAIIQALAEFQGIGRRFQHLGKFATPKGEVMLVDDYGHHPSEVAATIKAARAGWPDKRLVMAYQPHRYTRTRDLYEDFIEVLSQVDCLLLLEVYSAGEAPIPGADGRALCRSIRLRGQLDPIFIASPDQLAEVLPDVLQEGDLLLTQGAGNIGALSRQLAASELGFSTAATTEVKP.

127-133 (GTHGKTT) is an ATP binding site.

The protein belongs to the MurCDEF family.

The protein resides in the cytoplasm. It carries out the reaction UDP-N-acetyl-alpha-D-muramate + L-alanine + ATP = UDP-N-acetyl-alpha-D-muramoyl-L-alanine + ADP + phosphate + H(+). Its pathway is cell wall biogenesis; peptidoglycan biosynthesis. In terms of biological role, cell wall formation. The polypeptide is UDP-N-acetylmuramate--L-alanine ligase (Shewanella sp. (strain MR-4)).